The primary structure comprises 67 residues: uncharacterized protein (67 aa).

The chain crosses the membrane as a helical span at residues 26-46; the sequence is CYLLFCFLECFLNLFKKCGVF.

It belongs to the plectrovirus ORF11 family.

Its subcellular location is the host membrane. This is an uncharacterized protein from Spiroplasma virus SpV1-C74 (SpV1).